The following is a 631-amino-acid chain: Eukaryotic translation initiation factor 3 subunit L (631 aa).

Residues 335-526 enclose the PCI domain; sequence TFVSVLIFFI…AETTLLDGER (192 aa). The tract at residues 571–631 is disordered; it reads KSAPLPVRKP…PKSRQARIAA (61 aa). Over residues 580–612 the composition is skewed to low complexity; that stretch reads PASSSAPAPATTAAPISKSGESAAPAPAEAPAA.

Belongs to the eIF-3 subunit L family. As to quaternary structure, component of the eukaryotic translation initiation factor 3 (eIF-3) complex.

Its subcellular location is the cytoplasm. Component of the eukaryotic translation initiation factor 3 (eIF-3) complex, which is involved in protein synthesis of a specialized repertoire of mRNAs and, together with other initiation factors, stimulates binding of mRNA and methionyl-tRNAi to the 40S ribosome. The eIF-3 complex specifically targets and initiates translation of a subset of mRNAs involved in cell proliferation. The polypeptide is Eukaryotic translation initiation factor 3 subunit L (Cryptococcus neoformans var. neoformans serotype D (strain B-3501A) (Filobasidiella neoformans)).